A 123-amino-acid chain; its full sequence is Large ribosomal subunit protein bL12 (123 aa).

It belongs to the bacterial ribosomal protein bL12 family. In terms of assembly, homodimer. Part of the ribosomal stalk of the 50S ribosomal subunit. Forms a multimeric L10(L12)X complex, where L10 forms an elongated spine to which 2 to 4 L12 dimers bind in a sequential fashion. Binds GTP-bound translation factors.

Forms part of the ribosomal stalk which helps the ribosome interact with GTP-bound translation factors. Is thus essential for accurate translation. The polypeptide is Large ribosomal subunit protein bL12 (Neisseria perflava).